We begin with the raw amino-acid sequence, 922 residues long: TBC1 domain family member 2A (922 aa).

The segment at 1-37 (MEDAPERTPSSSESTQPPGLAREPEVVSPGDSEGCAR) is disordered. Residues 1 to 168 (MEDAPERTPS…AENGPTLHLK (168 aa)) are interaction with CADH1. A compositionally biased stretch (polar residues) spans 8-17 (TPSSSESTQP). Residues 43–141 (PKKLCGYLSK…WLQQLQMKRW (99 aa)) enclose the PH domain. The tract at residues 228–297 (NKQAQAAAHG…KRQSNTFPFF (70 aa)) is disordered. Basic and acidic residues predominate over residues 262–271 (LPEKEPEDPA). The segment covering 275 to 295 (PRSSVPSGPTQKPKRQSNTFP) has biased composition (polar residues). Positions 298-435 (SDGLARSRTA…QKLTEDLAQP (138 aa)) are interaction with RAC1. 3 coiled-coil regions span residues 302-333 (ARSR…ELVI), 362-417 (LELV…NHAK), and 443-476 (FLSQ…QVTK). Residues 619 to 811 (GVPREHRPRV…RVWDAFLYEG (193 aa)) enclose the Rab-GAP TBC domain. Residues 869 to 904 (MKQLRQLRAAHRERLEAELRELELLKVEYLQRRASL) are a coiled coil. Ser914 is subject to Phosphoserine.

In terms of assembly, interacts with activated RAC1 and CDH1.

Its subcellular location is the cytoplasm. The protein resides in the cytoplasmic vesicle. The protein localises to the cell junction. In terms of biological role, acts as a GTPase-activating protein for RAB7A. Signal effector acting as a linker between RAC1 and RAB7A, leading to RAB7A inactivation and subsequent inhibition of cadherin degradation and reduced cell-cell adhesion. This Mus musculus (Mouse) protein is TBC1 domain family member 2A (Tbc1d2).